We begin with the raw amino-acid sequence, 98 residues long: NADH-ubiquinone oxidoreductase chain 4L (98 aa).

Helical transmembrane passes span 1 to 21, 29 to 49, and 61 to 81; these read MSLV…GLLM, SLLC…IMIL, and IILL…LVMV.

This sequence belongs to the complex I subunit 4L family. As to quaternary structure, core subunit of respiratory chain NADH dehydrogenase (Complex I) which is composed of 45 different subunits.

The protein resides in the mitochondrion inner membrane. The enzyme catalyses a ubiquinone + NADH + 5 H(+)(in) = a ubiquinol + NAD(+) + 4 H(+)(out). Its function is as follows. Core subunit of the mitochondrial membrane respiratory chain NADH dehydrogenase (Complex I) which catalyzes electron transfer from NADH through the respiratory chain, using ubiquinone as an electron acceptor. Part of the enzyme membrane arm which is embedded in the lipid bilayer and involved in proton translocation. This is NADH-ubiquinone oxidoreductase chain 4L (MT-ND4L) from Mogera wogura (Japanese mole).